A 193-amino-acid chain; its full sequence is dCTP deaminase (193 aa).

DCTP is bound by residues 110 to 115, Asp128, 136 to 138, Tyr171, Lys178, and Gln182; these read RSSLAR and VLE. The Proton donor/acceptor role is filled by Glu138. The disordered stretch occupies residues 169–193; it reads RPYNRRQDAKYRDQQGAVASRIDKD.

This sequence belongs to the dCTP deaminase family. Homotrimer.

It carries out the reaction dCTP + H2O + H(+) = dUTP + NH4(+). It functions in the pathway pyrimidine metabolism; dUMP biosynthesis; dUMP from dCTP (dUTP route): step 1/2. Functionally, catalyzes the deamination of dCTP to dUTP. This is dCTP deaminase from Salmonella paratyphi B (strain ATCC BAA-1250 / SPB7).